The sequence spans 313 residues: Porphobilinogen deaminase (313 aa).

Cys242 is subject to S-(dipyrrolylmethanemethyl)cysteine.

The protein belongs to the HMBS family. In terms of assembly, monomer. The cofactor is dipyrromethane.

It catalyses the reaction 4 porphobilinogen + H2O = hydroxymethylbilane + 4 NH4(+). It functions in the pathway porphyrin-containing compound metabolism; protoporphyrin-IX biosynthesis; coproporphyrinogen-III from 5-aminolevulinate: step 2/4. Its function is as follows. Tetrapolymerization of the monopyrrole PBG into the hydroxymethylbilane pre-uroporphyrinogen in several discrete steps. This Photorhabdus laumondii subsp. laumondii (strain DSM 15139 / CIP 105565 / TT01) (Photorhabdus luminescens subsp. laumondii) protein is Porphobilinogen deaminase.